A 223-amino-acid chain; its full sequence is Small ribosomal subunit protein uS5 (223 aa).

Low complexity predominate over residues 1-15 (MTEAVAAEATETAPA). A disordered region spans residues 1–51 (MTEAVAAEATETAPATDDRRGGRRGERGDRGQGRGDRGGRGGRDGGREAEK). The span at 16–51 (TDDRRGGRRGERGDRGQGRGDRGGRGGRDGGREAEK) shows a compositional bias: basic and acidic residues. The 64-residue stretch at 54–117 (FVERVVTINR…EEAKKSFFRV (64 aa)) folds into the S5 DRBM domain.

This sequence belongs to the universal ribosomal protein uS5 family. In terms of assembly, part of the 30S ribosomal subunit. Contacts proteins S4 and S8.

Functionally, with S4 and S12 plays an important role in translational accuracy. Located at the back of the 30S subunit body where it stabilizes the conformation of the head with respect to the body. This Paenarthrobacter aurescens (strain TC1) protein is Small ribosomal subunit protein uS5.